Reading from the N-terminus, the 179-residue chain is Translation initiation factor IF-3 (179 aa).

It belongs to the IF-3 family. In terms of assembly, monomer.

It localises to the cytoplasm. Functionally, IF-3 binds to the 30S ribosomal subunit and shifts the equilibrium between 70S ribosomes and their 50S and 30S subunits in favor of the free subunits, thus enhancing the availability of 30S subunits on which protein synthesis initiation begins. This chain is Translation initiation factor IF-3, found in Leptospira borgpetersenii serovar Hardjo-bovis (strain L550).